The primary structure comprises 764 residues: Acylamino-acid-releasing enzyme (764 aa).

Active-site charge relay system residues include serine 618, aspartate 707, and histidine 739.

The protein belongs to the peptidase S9C family. Homotetramer.

The protein localises to the cytoplasm. It localises to the nucleus. The catalysed reaction is Cleavage of an N-acetyl or N-formyl amino acid from the N-terminus of a polypeptide.. Its activity is regulated as follows. Strongly inhibited by the serine protease inhibitor diisopropyl fluorophosphate. Functionally, catalyzes the hydrolysis of the N-terminal peptide bond of an N-acetylated peptide to generate an N-acetylated amino acid and a peptide with a free N-terminus. Can degrade the glycated RuBisCO (ribulose-1,5-bisphosphate carboxylase/oxygenase) protein but not the native protein. May be involved in the elimination of glycated proteins. Plays a homeostatic role in sustaining the cytoplasmic antioxidative system. May contribute to the elimination of the oxidized proteins in the cytoplasm. In Arabidopsis thaliana (Mouse-ear cress), this protein is Acylamino-acid-releasing enzyme.